The sequence spans 1288 residues: Peroxidasin homolog (1288 aa).

A signal peptide spans 1–16 (MNLLLYLLLLVPWVLG). One can recognise an LRRNT domain in the interval 17–51 (SEDGCPAKCTCDKKGFTVDCSNAGLTRIPKGISSN). LRR repeat units lie at residues 27–49 (CDKK…KGIS), 50–72 (SNVR…DLEG), 73–96 (FPLL…ILDH), 97–120 (LPEL…ASES), 122–143 (PLAS…WLLQ), 145–168 (FPEL…LFEN), and 204–227 (AYCT…LLKC). The 49-residue stretch at 180–228 (NPWNCDCRVTKVKALLRKVEWERKAYCTNPVELRHQAIDEVEESLLKCA) folds into the LRRCT domain. N-linked (GlcNAc...) asparagine glycosylation is present at asparagine 247. Positions 304–323 (LRQSHHSNGAPQFTYKPRDN) are disordered. 2 consecutive Ig-like C2-type domains span residues 314–400 (PQFT…FSLD) and 407–494 (PNIY…AKLT). A disulfide bond links cysteine 335 and cysteine 384. 2 LRR repeats span residues 356–381 (SSRK…DSGR) and 387–412 (VNSL…IYEG). A disulfide bond links cysteine 428 and cysteine 478. Asparagine 594 is a glycosylation site (N-linked (GlcNAc...) asparagine). Cysteine 624 and cysteine 640 are oxidised to a cystine. Heme b is bound at residue aspartate 718. Catalysis depends on histidine 719, which acts as the Proton acceptor. Aspartate 720 serves as a coordination point for Ca(2+). 2 disulfide bridges follow: cysteine 739–cysteine 749 and cysteine 743–cysteine 770. N-linked (GlcNAc...) asparagine glycosylation is present at asparagine 740. Residues threonine 802, phenylalanine 804, aspartate 806, and serine 808 each coordinate Ca(2+). Asparagine 857 is a glycosylation site (N-linked (GlcNAc...) asparagine). Heme b is bound by residues glutamate 876 and histidine 972. 2 LRR repeats span residues 998–1022 (KAFF…LFAS) and 1049–1073 (SLDL…EYRQ). 2 cysteine pairs are disulfide-bonded: cysteine 1075–cysteine 1132 and cysteine 1173–cysteine 1200. An LRR 12 repeat occupies 1168-1189 (LARLLCDNGDEIDRIQKDVFMY).

Belongs to the peroxidase family. XPO subfamily. Ca(2+) is required as a cofactor. Requires heme b as cofactor.

Its subcellular location is the secreted. The protein localises to the extracellular space. The protein resides in the extracellular matrix. It catalyses the reaction L-lysyl-[collagen] + L-methionyl-[collagen] + H2O2 = [collagen]-L-lysyl-N-S-L-methionyl-[collagen] + 2 H2O + H(+). The catalysed reaction is bromide + H2O2 = hypobromite + H2O. It carries out the reaction L-lysyl-[collagen] + L-methionyl-[collagen] + hypobromite = [collagen]-L-lysyl-N-S-L-methionyl-[collagen] + bromide + H2O + H(+). The enzyme catalyses L-tyrosyl-[protein] + bromide + H2O2 + H(+) = 3-bromo-L-tyrosyl-[protein] + 2 H2O. It catalyses the reaction hypobromite + L-tyrosyl-[protein] + H(+) = 3-bromo-L-tyrosyl-[protein] + H2O. In terms of biological role, catalyzes the two-electron oxidation of bromide by hydrogen peroxide and generates hypobromite as a reactive intermediate which mediates the formation of sulfilimine cross-links between methionine and hydroxylysine residues within an uncross-linked collagen IV NC1 hexamer. Plays a role in the attachment of tissues and in axonal guidance during early developmental stages. May functionally antagonize the peroxidasin pxn-2 to maintain neuronal development. The protein is Peroxidasin homolog of Caenorhabditis briggsae.